Reading from the N-terminus, the 379-residue chain is Cytochrome b (379 aa).

A run of 4 helical transmembrane segments spans residues 32-52 (YGSL…VLAT), 76-98 (WLLR…LHIG), 111-131 (VWNI…LGYV), and 177-197 (FFAL…LHIF). Residues His82 and His96 each contribute to the heme b site. Residues His181 and His195 each coordinate heme b. Residue His200 participates in a ubiquinone binding. The next 4 membrane-spanning stretches (helical) occupy residues 223 to 243 (YSVK…VFTL), 287 to 304 (LGGV…FLFS), 320 to 340 (LARL…WLGS), and 348 to 367 (NEVA…TMCA).

Belongs to the cytochrome b family. As to quaternary structure, the main subunits of complex b-c1 are: cytochrome b, cytochrome c1 and the Rieske protein. Heme b serves as cofactor.

The protein localises to the mitochondrion inner membrane. Its function is as follows. Component of the ubiquinol-cytochrome c reductase complex (complex III or cytochrome b-c1 complex) that is part of the mitochondrial respiratory chain. The b-c1 complex mediates electron transfer from ubiquinol to cytochrome c. Contributes to the generation of a proton gradient across the mitochondrial membrane that is then used for ATP synthesis. This chain is Cytochrome b (mt:Cyt-b), found in Brachionus plicatilis (Marine rotifer).